Here is a 420-residue protein sequence, read N- to C-terminus: Pyridinium-3,5-bisthiocarboxylic acid mononucleotide nickel insertion protein (420 aa).

Positions 81–104 (NHEHKHNHHEIKNDEPAHSHEHHH) are disordered. The span at 90–99 (EIKNDEPAHS) shows a compositional bias: basic and acidic residues.

It belongs to the LarC family.

It carries out the reaction Ni(II)-pyridinium-3,5-bisthiocarboxylate mononucleotide = pyridinium-3,5-bisthiocarboxylate mononucleotide + Ni(2+). Its function is as follows. Involved in the biosynthesis of a nickel-pincer cofactor ((SCS)Ni(II) pincer complex). Binds Ni(2+), and functions in nickel delivery to pyridinium-3,5-bisthiocarboxylic acid mononucleotide (P2TMN), to form the mature cofactor. Is thus probably required for the activation of nickel-pincer cofactor-dependent enzymes. The sequence is that of Pyridinium-3,5-bisthiocarboxylic acid mononucleotide nickel insertion protein from Clostridium acetobutylicum (strain ATCC 824 / DSM 792 / JCM 1419 / IAM 19013 / LMG 5710 / NBRC 13948 / NRRL B-527 / VKM B-1787 / 2291 / W).